Consider the following 85-residue polypeptide: MKMTLIAILTCAAVLVLHITAAEELEAESQLMEVGMPDTELEAVDEERLFECSVSCEIEKEGNKDCKKKKCKGGWKCKFNMCVKV.

A signal peptide spans 1–22 (MKMTLIAILTCAAVLVLHITAA). The propeptide occupies 23–48 (EELEAESQLMEVGMPDTELEAVDEER). 3 disulfides stabilise this stretch: cysteine 52–cysteine 66, cysteine 56–cysteine 77, and cysteine 71–cysteine 82.

This sequence belongs to the neurotoxin 12 (Hwtx-2) family. 02 (Hwtx-2) subfamily. In terms of assembly, monomer. As to expression, expressed by the venom gland.

The protein resides in the secreted. In terms of biological role, neurotoxin active on both insects and mammals. The sequence is that of U4-theraphotoxin-Hhn1a from Cyriopagopus hainanus (Chinese bird spider).